A 404-amino-acid polypeptide reads, in one-letter code: Interferon-activable protein 205-A (404 aa).

The region spanning 1-88 (MENEYKRLVL…AEILKKERSE (88 aa)) is the Pyrin domain. The tract at residues 85 to 198 (ERSEVTEETS…KSQPQNQNIP (114 aa)) is disordered. Composition is skewed to low complexity over residues 102–112 (ASPATPTSTTS) and 122–132 (TSTTQEETSTA). Positions 137–147 (GMSEEKTDVKK) are enriched in basic and acidic residues. Over residues 168–185 (QSPISQVSSSASSNIPSA) the composition is skewed to low complexity. The span at 186-197 (KNQKSQPQNQNI) shows a compositional bias: polar residues. Positions 192-392 (PQNQNIPRGA…CGDHSFVKVT (201 aa)) constitute an HIN-200 domain.

It belongs to the HIN-200 family.

The protein resides in the nucleus. May act as a transcriptional regulator in the myeloid lineage. Inhibits cell growth via p53/TP53 and RB1-dependent and independent pathways. This chain is Interferon-activable protein 205-A (Ifi205a), found in Mus musculus (Mouse).